Consider the following 805-residue polypeptide: Transducer protein BasT (805 aa).

The next 2 membrane-spanning stretches (helical) occupy residues 25-45 (FNVL…YIHL) and 296-316 (NLAG…LTVG). HAMP domains follow at residues 317–370 (RRTS…TAAS) and 437–490 (ERLE…ATLA). One can recognise a Methyl-accepting transducer domain in the interval 509-745 (SAAEIRSASD…EVVTMIDEVT (237 aa)). Residues 513 to 532 (IRSASDQVSESVQDISADAD) are disordered. Residues 516–526 (ASDQVSESVQD) are compositionally biased toward polar residues. 3 positions are modified to glutamate methyl ester (Glu): E554, E736, and E763. The disordered stretch occupies residues 752–779 (ATESQQVSAAAEEQAASVSEVAGRADDL). The span at 754 to 773 (ESQQVSAAAEEQAASVSEVA) shows a compositional bias: low complexity.

The protein belongs to the methyl-accepting chemotaxis (MCP) protein family. Interacts with CheA, CheY, CheW1 and CheW2. In terms of processing, methylated by CheR.

It is found in the cell membrane. In terms of biological role, mediates chemotaxis towards five attractant amino acids (leucine, isoleucine, valine, methionine and cysteine). Probably transduces the signal from the substrate-binding protein BasB to the histidine kinase CheA. This is Transducer protein BasT (basT) from Halobacterium salinarum (strain ATCC 29341 / DSM 671 / R1).